The chain runs to 744 residues: Tripartite motif-containing protein 2 (744 aa).

Ser-10 bears the Phosphoserine mark. The segment at Cys-23–Arg-64 adopts an RING-type zinc-finger fold. The B box-type zinc-finger motif lies at Gly-113–Leu-154. Zn(2+)-binding residues include Cys-118, His-121, Cys-141, and His-146. A Filamin repeat occupies Thr-320–Val-421. Thr-371 carries the post-translational modification Phosphothreonine. Residues Ser-375, Ser-424, and Ser-428 each carry the phosphoserine modification. The interval Glu-432–Lys-462 is disordered. 6 NHL repeats span residues Ile-473–Asp-516, Lys-520–Asp-563, Gly-564–Asn-605, Val-609–Glu-652, Met-656–Ser-699, and Gly-700–Leu-743.

This sequence belongs to the TRIM/RBCC family. As to quaternary structure, forms homooligomers. Interacts with TRIM3; this interaction reduces TRIM2 activity. Interacts with myosin V; myosin V may not be a substrate for ubiquitination. Interacts with NEFL. Interacts with phosphorylated BCL2L11. Interacts with SIRPA. In terms of processing, RING-type zinc finger-dependent and UBE2D1-dependent autoubiquitination.

It localises to the cytoplasm. The enzyme catalyses S-ubiquitinyl-[E2 ubiquitin-conjugating enzyme]-L-cysteine + [acceptor protein]-L-lysine = [E2 ubiquitin-conjugating enzyme]-L-cysteine + N(6)-ubiquitinyl-[acceptor protein]-L-lysine.. Its pathway is protein modification; protein ubiquitination. Functionally, UBE2D1-dependent E3 ubiquitin-protein ligase that mediates the ubiquitination of NEFL and of phosphorylated BCL2L11. Plays a neuroprotective function. May play a role in neuronal rapid ischemic tolerance. Plays a role in antiviral immunity and limits New World arenavirus infection independently of its ubiquitin ligase activity. The chain is Tripartite motif-containing protein 2 (TRIM2) from Ailuropoda melanoleuca (Giant panda).